A 206-amino-acid chain; its full sequence is Ribosomal RNA large subunit methyltransferase E (206 aa).

Residues glycine 60, tryptophan 62, aspartate 80, aspartate 96, and aspartate 121 each contribute to the S-adenosyl-L-methionine site. The Proton acceptor role is filled by lysine 161.

Belongs to the class I-like SAM-binding methyltransferase superfamily. RNA methyltransferase RlmE family.

The protein localises to the cytoplasm. The enzyme catalyses uridine(2552) in 23S rRNA + S-adenosyl-L-methionine = 2'-O-methyluridine(2552) in 23S rRNA + S-adenosyl-L-homocysteine + H(+). Its function is as follows. Specifically methylates the uridine in position 2552 of 23S rRNA at the 2'-O position of the ribose in the fully assembled 50S ribosomal subunit. The chain is Ribosomal RNA large subunit methyltransferase E from Hydrogenovibrio crunogenus (strain DSM 25203 / XCL-2) (Thiomicrospira crunogena).